The sequence spans 237 residues: Small ribosomal subunit protein uS3 (237 aa).

One can recognise a KH type-2 domain in the interval 39 to 107 (IRAYLMEELK…ETHLNIVEVR (69 aa)). Positions 213-237 (MASERRATESDNQGGGGRDRRRENA) are disordered.

The protein belongs to the universal ribosomal protein uS3 family. In terms of assembly, part of the 30S ribosomal subunit. Forms a tight complex with proteins S10 and S14.

Its function is as follows. Binds the lower part of the 30S subunit head. Binds mRNA in the 70S ribosome, positioning it for translation. The protein is Small ribosomal subunit protein uS3 of Sinorhizobium fredii (strain NBRC 101917 / NGR234).